Consider the following 214-residue polypeptide: MRFPSDLCPSSGTGELSARSQVRWRLCWENELELADHAELAEFLRKAYNPSGTFNARPFEGGRSWAGARPEVRAIGYDSRGVAAHIAALRRFIKVGAVDLLVAELGLYAVRPDLEGLRISHSMLVMYPALKELGVPFGFGTVRHALQKHLTRLLGKAGLATIVSGVRVRSTLRDMRLDMPPTRVEDLLILVFPIGRPMSDWPAGTIIDRNGPEL.

Belongs to the NodA family.

Its subcellular location is the cytoplasm. Functionally, N-acyltransferase required for nodulation. Acts in the production of a small, heat-stable compound (Nod) that stimulates mitosis in various plant protoplasts. This Methylobacterium nodulans (strain LMG 21967 / CNCM I-2342 / ORS 2060) protein is Nodulation protein A.